The sequence spans 177 residues: Large ribosomal subunit protein bL31m (177 aa).

Residues 1–14 (MLKSIFAKRFASTG) constitute a mitochondrion transit peptide. The sufficient for general mitochondrial translation stretch occupies residues 36 to 118 (KSRPAIYHQF…FSVDSTTPNS (83 aa)). The tract at residues 87-177 (LVVVDANSGG…KLASKKRDKK (91 aa)) is sufficient for dosage suppression of COX2 mutation. A compositionally biased stretch (polar residues) spans 111-123 (VDSTTPNSSSETV). Positions 111–144 (VDSTTPNSSSETVELSEENKKKTQIKKEEKEDVS) are disordered. The span at 127 to 144 (EENKKKTQIKKEEKEDVS) shows a compositional bias: basic and acidic residues.

Belongs to the bacterial ribosomal protein bL31 family. Highly divergent. Component of the mitochondrial large ribosomal subunit (mt-LSU). Mature yeast 74S mitochondrial ribosomes consist of a small (37S) and a large (54S) subunit. The 37S small subunit contains a 15S ribosomal RNA (15S mt-rRNA) and 34 different proteins. The 54S large subunit contains a 21S rRNA (21S mt-rRNA) and 46 different proteins.

It is found in the mitochondrion. In terms of biological role, component of the mitochondrial ribosome (mitoribosome), a dedicated translation machinery responsible for the synthesis of mitochondrial genome-encoded proteins, including at least some of the essential transmembrane subunits of the mitochondrial respiratory chain. The mitoribosomes are attached to the mitochondrial inner membrane and translation products are cotranslationally integrated into the membrane. Overexpression of bL31m suppresses mutations in the COX2 leader peptide-encoding and initiation codon regions. The polypeptide is Large ribosomal subunit protein bL31m (MRPL36) (Saccharomyces cerevisiae (strain ATCC 204508 / S288c) (Baker's yeast)).